Here is a 78-residue protein sequence, read N- to C-terminus: Bowman-Birk type proteinase inhibitors I-A, I-B, and I-A' (78 aa).

7 disulfides stabilise this stretch: Cys-18–Cys-72, Cys-19–Cys-34, Cys-22–Cys-68, Cys-24–Cys-32, Cys-42–Cys-49, Cys-46–Cys-61, and Cys-51–Cys-59.

This sequence belongs to the Bowman-Birk serine protease inhibitor family.

Its function is as follows. These inhibitors strongly inhibit trypsin. The protein is Bowman-Birk type proteinase inhibitors I-A, I-B, and I-A' of Phaseolus angularis (Azuki bean).